The sequence spans 286 residues: Tyrosine recombinase XerA (286 aa).

Residues 5–82 enclose the Core-binding (CB) domain; that stretch reads TLRSEVLEEF…ALKAYFKFEG (78 aa). One can recognise a Tyr recombinase domain in the interval 98–274; it reads TLPKSLTEEE…TAKHLKEAVE (177 aa). Residues Arg-135, Lys-160, His-226, Arg-229, and His-252 contribute to the active site. The O-(3'-phospho-DNA)-tyrosine intermediate role is filled by Tyr-261.

Belongs to the 'phage' integrase family. XerA subfamily.

It is found in the cytoplasm. Functionally, site-specific tyrosine recombinase, which acts by catalyzing the cutting and rejoining of the recombining DNA molecules. This chain is Tyrosine recombinase XerA, found in Pyrococcus furiosus (strain ATCC 43587 / DSM 3638 / JCM 8422 / Vc1).